Consider the following 431-residue polypeptide: Protein EARLY STARVATION 1, chloroplastic (431 aa).

Residues 1-19 (MAACSRGLVARPFDLTARG) constitute a chloroplast transit peptide. Disordered stretches follow at residues 65–126 (GNKP…DTGI) and 403–431 (GVYPTIDFSASSPAPPSDDPPGMPPSPLE). Residues 415 to 431 (PAPPSDDPPGMPPSPLE) are compositionally biased toward pro residues.

This sequence belongs to the ESV1 family.

Its subcellular location is the plastid. It is found in the chloroplast stroma. Its function is as follows. Binds preferentially to highly ordered alpha-glucans, such as starch and crystalline maltodextrins. Involved in the organization of the starch granule matrix, thus influencing starch turnover by modulating the accessibility of starch polymers to modifying and degrading enzymes. Required for the control of starch degradation in leaves and starch distribution in nonphotosynthetic parts. Promotes gravitropic responses, negative in shoots but positive in roots, by facilitating starch granules (statoliths) formation in hypocotyls and roots columella. Facilitates tight packing of starch granules in grains. The protein is Protein EARLY STARVATION 1, chloroplastic of Oryza sativa subsp. japonica (Rice).